Here is a 462-residue protein sequence, read N- to C-terminus: tRNA-2-methylthio-N(6)-dimethylallyladenosine synthase (462 aa).

The region spanning 28–144 (KKLFVKTYGC…LPKMMEAVNA (117 aa)) is the MTTase N-terminal domain. The [4Fe-4S] cluster site is built by C37, C73, C107, C181, C185, and C188. The Radical SAM core domain occupies 167–398 (ATRGPTAFLT…QALLTQQQRA (232 aa)). The TRAM domain maps to 401-462 (DAMVGRRVKV…KTNSLTGRLV (62 aa)).

This sequence belongs to the methylthiotransferase family. MiaB subfamily. As to quaternary structure, monomer. [4Fe-4S] cluster serves as cofactor.

Its subcellular location is the cytoplasm. The catalysed reaction is N(6)-dimethylallyladenosine(37) in tRNA + (sulfur carrier)-SH + AH2 + 2 S-adenosyl-L-methionine = 2-methylsulfanyl-N(6)-dimethylallyladenosine(37) in tRNA + (sulfur carrier)-H + 5'-deoxyadenosine + L-methionine + A + S-adenosyl-L-homocysteine + 2 H(+). In terms of biological role, catalyzes the methylthiolation of N6-(dimethylallyl)adenosine (i(6)A), leading to the formation of 2-methylthio-N6-(dimethylallyl)adenosine (ms(2)i(6)A) at position 37 in tRNAs that read codons beginning with uridine. This is tRNA-2-methylthio-N(6)-dimethylallyladenosine synthase from Jannaschia sp. (strain CCS1).